The chain runs to 974 residues: ATP-dependent RNA helicase glh-2 (974 aa).

The interval 212-435 (HESGFGGGKS…SGFGGGNDGG (224 aa)) is disordered. Positions 215–250 (GFGGGKSGGFGGGNSGGSGFGSGGNSNGFGSGGGGQ) are enriched in gly residues. Polar residues predominate over residues 256–267 (NNNCFNCQQPGH). CCHC-type zinc fingers lie at residues 257–274 (NNCF…DCPE) and 282–299 (RVCY…DCPE). 2 stretches are compositionally biased toward basic and acidic residues: residues 268–282 (RSND…REPR) and 293–307 (NSRD…REGR). Over residues 309 to 364 (GFTGGSSGFGGGNGGGTGFDSGLTNGFGSGNNGESGFGSGGFGGNSNGFGSGGGGQ) the composition is skewed to gly residues. Residues 370–381 (NNNCFNCQQPGH) are compositionally biased toward polar residues. 2 CCHC-type zinc fingers span residues 371-388 (NNCF…DCPE) and 396-413 (RVCY…DCPE). Basic and acidic residues-rich tracts occupy residues 382-396 (RSND…REPR) and 407-421 (NSRD…REGR). The segment covering 426–435 (SGFGGGNDGG) has biased composition (gly residues). 2 consecutive CCHC-type zinc fingers follow at residues 453 to 470 (MKCF…ECPE) and 473 to 490 (RGCF…ECPN). The Q motif motif lies at 552–580 (KTFSEANLGETMKKNVAHAGYTKTTPIQQ). A Helicase ATP-binding domain is found at 583–767 (LPLIHQGHDI…RNHLKEGYIM (185 aa)). 596 to 603 (AQTGSGKT) is an ATP binding site. Residues 710–713 (DEAD) carry the DEAD box motif. The 148-residue stretch at 803–950 (DIDSYTTEKN…LVPEWMQGAS (148 aa)) folds into the Helicase C-terminal domain.

Belongs to the DEAD box helicase family. DDX4/VASA subfamily. In terms of assembly, interacts (via C-terminus) with kgb-1.

The enzyme catalyses ATP + H2O = ADP + phosphate + H(+). Its function is as follows. Probable ATP-binding RNA helicase. In Caenorhabditis elegans, this protein is ATP-dependent RNA helicase glh-2 (glh-2).